A 462-amino-acid polypeptide reads, in one-letter code: Glutamate--tRNA ligase 1 (462 aa).

A 'HIGH' region motif is present at residues 8 to 18 (PSPTGYLHIGG). Residues 237-241 (KLSKR) carry the 'KMSKS' region motif. ATP is bound at residue lysine 240.

This sequence belongs to the class-I aminoacyl-tRNA synthetase family. Glutamate--tRNA ligase type 1 subfamily. In terms of assembly, monomer.

The protein localises to the cytoplasm. It catalyses the reaction tRNA(Glu) + L-glutamate + ATP = L-glutamyl-tRNA(Glu) + AMP + diphosphate. In terms of biological role, catalyzes the attachment of glutamate to tRNA(Glu) in a two-step reaction: glutamate is first activated by ATP to form Glu-AMP and then transferred to the acceptor end of tRNA(Glu). This is Glutamate--tRNA ligase 1 from Sulfurimonas denitrificans (strain ATCC 33889 / DSM 1251) (Thiomicrospira denitrificans (strain ATCC 33889 / DSM 1251)).